A 235-amino-acid polypeptide reads, in one-letter code: 1-(5-phosphoribosyl)-5-[(5-phosphoribosylamino)methylideneamino] imidazole-4-carboxamide isomerase (235 aa).

Asp-8 acts as the Proton acceptor in catalysis. Asp-127 acts as the Proton donor in catalysis.

It belongs to the HisA/HisF family.

The protein localises to the cytoplasm. The enzyme catalyses 1-(5-phospho-beta-D-ribosyl)-5-[(5-phospho-beta-D-ribosylamino)methylideneamino]imidazole-4-carboxamide = 5-[(5-phospho-1-deoxy-D-ribulos-1-ylimino)methylamino]-1-(5-phospho-beta-D-ribosyl)imidazole-4-carboxamide. The protein operates within amino-acid biosynthesis; L-histidine biosynthesis; L-histidine from 5-phospho-alpha-D-ribose 1-diphosphate: step 4/9. This is 1-(5-phosphoribosyl)-5-[(5-phosphoribosylamino)methylideneamino] imidazole-4-carboxamide isomerase from Nautilia profundicola (strain ATCC BAA-1463 / DSM 18972 / AmH).